A 101-amino-acid chain; its full sequence is Citrate lyase acyl carrier protein (101 aa).

Serine 14 carries the post-translational modification O-(phosphoribosyl dephospho-coenzyme A)serine.

This sequence belongs to the CitD family. Oligomer with a subunit composition of (alpha,beta,gamma)6.

The protein resides in the cytoplasm. Its function is as follows. Covalent carrier of the coenzyme of citrate lyase. This chain is Citrate lyase acyl carrier protein, found in Clostridium perfringens (strain 13 / Type A).